Reading from the N-terminus, the 380-residue chain is Probable inactive reductase easA (380 aa).

Residues 25 to 27 (PMT), Ala60, Gln102, and His171 contribute to the FMN site. Substrate-binding residues include His171 and Asn174. Residues Lys223, Gly299, 324-325 (GR), and Arg325 each bind FMN. Tyr352 is a binding site for substrate.

It belongs to the NADH:flavin oxidoreductase/NADH oxidase family.

Functionally, probable inactive dehydrogenase; part of the gene cluster that mediates the biosynthesis of fungal ergot alkaloid ergovaline, the predominant ergopeptine product in E.festucae var. lolii. DmaW catalyzes the first step of ergot alkaloid biosynthesis by condensing dimethylallyl diphosphate (DMAP) and tryptophan to form 4-dimethylallyl-L-tryptophan. The second step is catalyzed by the methyltransferase easF that methylates 4-dimethylallyl-L-tryptophan in the presence of S-adenosyl-L-methionine, resulting in the formation of 4-dimethylallyl-L-abrine. The catalase easC and the FAD-dependent oxidoreductase easE then transform 4-dimethylallyl-L-abrine to chanoclavine-I which is further oxidized by easD in the presence of NAD(+), resulting in the formation of chanoclavine-I aldehyde. Agroclavine dehydrogenase easG then mediates the conversion of chanoclavine-I aldehyde to agroclavine via a non-enzymatic adduct reaction: the substrate is an iminium intermediate that is formed spontaneously from chanoclavine-I aldehyde in the presence of glutathione. The presence of easA is not required to complete this reaction. Further conversion of agroclavine to paspalic acid is a two-step process involving oxidation of agroclavine to elymoclavine and of elymoclavine to paspalic acid, the second step being performed by the elymoclavine oxidase cloA. Paspalic acid is then further converted to D-lysergic acid. Ergovaline is assembled from D-lysergic acid and three different amino acids by the D-lysergyl-peptide-synthetase composed of a monomudular (lpsB) and a trimodular (lpsA) nonribosomal peptide synthetase subunit. This chain is Probable inactive reductase easA, found in Epichloe festucae var. lolii (Neotyphodium lolii).